Consider the following 295-residue polypeptide: ATP-dependent (S)-NAD(P)H-hydrate dehydratase (295 aa).

The region spanning 9-289 (LLERARNLVP…DQIHQVFDDL (281 aa)) is the YjeF C-terminal domain. Residues Gly-109 and 162–168 (NAIEFCR) contribute to the (6S)-NADPHX site. ATP is bound by residues 193 to 197 (KGLND) and 214 to 223 (GSGRRCGGQG). Position 224 (Asp-224) interacts with (6S)-NADPHX.

The protein belongs to the NnrD/CARKD family. Mg(2+) serves as cofactor.

It catalyses the reaction (6S)-NADHX + ATP = ADP + phosphate + NADH + H(+). It carries out the reaction (6S)-NADPHX + ATP = ADP + phosphate + NADPH + H(+). Its function is as follows. Catalyzes the dehydration of the S-form of NAD(P)HX at the expense of ATP, which is converted to ADP. Together with NAD(P)HX epimerase, which catalyzes the epimerization of the S- and R-forms, the enzyme allows the repair of both epimers of NAD(P)HX, a damaged form of NAD(P)H that is a result of enzymatic or heat-dependent hydration. The sequence is that of ATP-dependent (S)-NAD(P)H-hydrate dehydratase from Anopheles darlingi (Mosquito).